We begin with the raw amino-acid sequence, 137 residues long: BolA-like protein 1 (137 aa).

Ser-81 bears the Phosphoserine mark. A disordered region spans residues 114 to 137; it reads WGENSQLDTSPPCLGGNKKTLGTP.

Belongs to the BolA/IbaG family. Interacts with GLRX5.

The protein localises to the mitochondrion. Its function is as follows. Acts as a mitochondrial iron-sulfur (Fe-S) cluster assembly factor that facilitates (Fe-S) cluster insertion into a subset of mitochondrial proteins. Probably acts together with the monothiol glutaredoxin GLRX5. May protect cells against oxidative stress. The polypeptide is BolA-like protein 1 (BOLA1) (Pongo abelii (Sumatran orangutan)).